Reading from the N-terminus, the 383-residue chain is Protein delta homolog 1 (383 aa).

A signal peptide spans 1 to 23 (MIATGALLRVLLLLLAFGHSTYG). EGF-like domains are found at residues 24-55 (AECD…PLCE), 59-86 (TSPG…KFCE), 88-125 (DIRA…KDCQ), 127-168 (KAGP…NFCE), 170-206 (VTNS…KTCS), and 208-245 (PVSN…PTCA). Residues 24-306 (AECDPACDPQ…PLLTEGQAIC (283 aa)) lie on the Extracellular side of the membrane. Intrachain disulfides connect C26–C37, C30–C43, C45–C54, C63–C68, C76–C85, C92–C103, C97–C113, C115–C124, C131–C144, C138–C156, C158–C167, C174–C185, C179–C194, C196–C205, C212–C223, C217–C233, and C235–C244. The helical transmembrane segment at 307-327 (FTILGVLTSLVVLGTVAIVFL) threads the bilayer. Over 328 to 383 (NKCEAWVSNLRYNHMLRKKKNLLLQYNSGEELAVNIIFPEKIDMTTFNKEAGDEDI) the chain is Cytoplasmic.

Monomer. Interacts with SH3RF2. In terms of processing, glycosylated. Pancreas and adrenal glands (at protein level).

The protein resides in the membrane. It is found in the cytoplasm. Its function is as follows. May have a role in neuroendocrine differentiation. Inhibits adipocyte differentiation. In Rattus norvegicus (Rat), this protein is Protein delta homolog 1 (Dlk1).